The following is a 105-amino-acid chain: MDARDIVLSVISVFSAAALVYRWLSLYDRVDMTVIFFATLLIASLTLLLISIELRMQRIMDEFKSVKRTIAVNSDDLEGRIERLFIEKVRDLEDKLESIERRMYR.

Transmembrane regions (helical) follow at residues 7-26 (VLSV…WLSL) and 30-52 (VDMT…LISI).

Its subcellular location is the cell membrane. This is an uncharacterized protein from Archaeoglobus fulgidus (strain ATCC 49558 / DSM 4304 / JCM 9628 / NBRC 100126 / VC-16).